Reading from the N-terminus, the 514-residue chain is Nucleus accumbens-associated protein 1 (514 aa).

Positions 30–94 (CDVSVVVKGH…CYTGRLSMNM (65 aa)) constitute a BTB domain. Residue lysine 167 forms a Glycyl lysine isopeptide (Lys-Gly) (interchain with G-Cter in SUMO1); alternate linkage. A Glycyl lysine isopeptide (Lys-Gly) (interchain with G-Cter in SUMO2); alternate cross-link involves residue lysine 167. Residue lysine 182 forms a Glycyl lysine isopeptide (Lys-Gly) (interchain with G-Cter in SUMO2) linkage. Disordered regions lie at residues 183–205 (RLWDSSQKEAGGSGGNNGSRKMA) and 242–279 (PSMSERTSPGTSSAYTSDSPSSYHNEEDEEEDAGEEGT). Serine 187 is subject to Phosphoserine. Over residues 242–251 (PSMSERTSPG) the composition is skewed to polar residues. The residue at position 245 (serine 245) is a Phosphoserine; by PKC. Residues 252-264 (TSSAYTSDSPSSY) show a composition bias toward low complexity. The segment covering 267 to 279 (EEDEEEDAGEEGT) has biased composition (acidic residues). Residues lysine 304, lysine 438, lysine 466, and lysine 485 each participate in a glycyl lysine isopeptide (Lys-Gly) (interchain with G-Cter in SUMO2) cross-link. Residues 360-457 (GTNVYITRAQ…DMCTNARRVV (98 aa)) form the BEN domain. Phosphoserine occurs at positions 492 and 496.

In terms of assembly, homooligomer; mediated by the BTB domain. Interacts with HDAC3 and HDAC4. Interacts (via BTB domain) with CUL3, PSMD7 and RCOR1. Ubiquitously expressed with higher expression in the brain, kidney and liver, and at lower levels in heart, lung and testes.

It localises to the nucleus. The protein resides in the cytoplasm. Functionally, functions as a transcriptional repressor. Seems to function as a transcriptional corepressor in neuronal cells through recruitment of HDAC3 and HDAC4. Contributes to tumor progression, and tumor cell proliferation and survival. This may be mediated at least in part through repressing transcriptional activity of GADD45GIP1. Required for recruiting the proteasome from the nucleus to the cytoplasm and dendritic spines. Involved in the acute behavioral and neurological responses to cocaine and amphetamines. The polypeptide is Nucleus accumbens-associated protein 1 (Nacc1) (Mus musculus (Mouse)).